We begin with the raw amino-acid sequence, 115 residues long: DNA-binding protein Ta0052 (115 aa).

Residues 1 to 41 (MDDDEELERIRRQQLESMQRQAMQEQMREEQEKQREAERAR) form a disordered region. The span at 15–25 (LESMQRQAMQE) shows a compositional bias: low complexity. The span at 26–41 (QMREEQEKQREAERAR) shows a compositional bias: basic and acidic residues.

Belongs to the PDCD5 family.

The protein is DNA-binding protein Ta0052 of Thermoplasma acidophilum (strain ATCC 25905 / DSM 1728 / JCM 9062 / NBRC 15155 / AMRC-C165).